We begin with the raw amino-acid sequence, 444 residues long: ATP-dependent protease ATPase subunit HslU (444 aa).

ATP is bound by residues Ile18, 60 to 65 (GVGKTE), Asp256, Glu322, and Arg394.

Belongs to the ClpX chaperone family. HslU subfamily. A double ring-shaped homohexamer of HslV is capped on each side by a ring-shaped HslU homohexamer. The assembly of the HslU/HslV complex is dependent on binding of ATP.

The protein resides in the cytoplasm. In terms of biological role, ATPase subunit of a proteasome-like degradation complex; this subunit has chaperone activity. The binding of ATP and its subsequent hydrolysis by HslU are essential for unfolding of protein substrates subsequently hydrolyzed by HslV. HslU recognizes the N-terminal part of its protein substrates and unfolds these before they are guided to HslV for hydrolysis. The chain is ATP-dependent protease ATPase subunit HslU from Buchnera aphidicola subsp. Cinara cedri (strain Cc).